The following is a 263-amino-acid chain: Type-2Ba cytolytic delta-endotoxin (263 aa).

The protein belongs to the cyt1/cyt2 endotoxin family. Post-translationally, active after proteolytic processing.

Functionally, kills the larvae of dipteran insects by making pores in the epithelial cell membrane of the insect midgut. In Bacillus thuringiensis subsp. israelensis, this protein is Type-2Ba cytolytic delta-endotoxin (cyt2Ba1).